We begin with the raw amino-acid sequence, 274 residues long: tRNA pseudouridine synthase A (274 aa).

Catalysis depends on D60, which acts as the Nucleophile. Y118 contacts substrate.

It belongs to the tRNA pseudouridine synthase TruA family. As to quaternary structure, homodimer.

It carries out the reaction uridine(38/39/40) in tRNA = pseudouridine(38/39/40) in tRNA. Formation of pseudouridine at positions 38, 39 and 40 in the anticodon stem and loop of transfer RNAs. The sequence is that of tRNA pseudouridine synthase A from Picosynechococcus sp. (strain ATCC 27264 / PCC 7002 / PR-6) (Agmenellum quadruplicatum).